The following is an 835-amino-acid chain: Protein translocase subunit SecA 1 (835 aa).

ATP-binding positions include Gln85, Gly103–Thr107, and Asp492. Residues Val788 to Val807 are disordered. Positions 819, 821, 830, and 831 each coordinate Zn(2+).

This sequence belongs to the SecA family. Monomer and homodimer. Part of the essential Sec protein translocation apparatus which comprises SecA, SecYEG and auxiliary proteins SecDF. Other proteins may also be involved. Requires Zn(2+) as cofactor.

The protein localises to the cell membrane. It localises to the cytoplasm. The enzyme catalyses ATP + H2O + cellular proteinSide 1 = ADP + phosphate + cellular proteinSide 2.. In terms of biological role, part of the Sec protein translocase complex. Interacts with the SecYEG preprotein conducting channel. Has a central role in coupling the hydrolysis of ATP to the transfer of proteins into and across the cell membrane, serving as an ATP-driven molecular motor driving the stepwise translocation of polypeptide chains across the membrane. This Bacillus thuringiensis (strain Al Hakam) protein is Protein translocase subunit SecA 1.